Here is a 478-residue protein sequence, read N- to C-terminus: UBP1-associated protein 2A (478 aa).

The interval M1–I99 is disordered. Residues G41 to T75 are compositionally biased toward acidic residues. 2 consecutive RRM domains span residues R140–K217 and K245–K328. Disordered stretches follow at residues I321–G359 and G442–H478. Residues G442 to P456 are compositionally biased toward low complexity. Residues G457–P470 are compositionally biased toward gly residues.

In terms of assembly, interacts with UBA1A, UBA2A, UBP1A, UBP1B, UBP1C and SRK2E. Expressed in young leaves, flowers and embryos.

It localises to the nucleus. Functionally, heterogeneous nuclear ribonucleoprotein (hnRNP)-like protein that acts as a component of a complex regulating the turnover of mRNAs in the nucleus. Binds with high affinity to RNA molecules that contain U-rich sequences in 3'-UTRs. May function in complex with UBP1 and contribute to the stabilization of mRNAs in the nucleus. However, unlike UBP1, UBA2A does not stimulate pre-mRNA splicing. In Arabidopsis thaliana (Mouse-ear cress), this protein is UBP1-associated protein 2A (UBA2A).